We begin with the raw amino-acid sequence, 165 residues long: UPF0303 protein BMA1246 (165 aa).

This sequence belongs to the UPF0303 family.

The protein is UPF0303 protein BMA1246 of Burkholderia mallei (strain ATCC 23344).